The primary structure comprises 233 residues: Ribose-5-phosphate isomerase A (233 aa).

Substrate is bound by residues 28–31 (TGST), 83–86 (DGAD), and 96–99 (KGGG). Residue glutamate 105 is the Proton acceptor of the active site. Lysine 123 is a substrate binding site.

The protein belongs to the ribose 5-phosphate isomerase family. Homodimer.

The catalysed reaction is aldehydo-D-ribose 5-phosphate = D-ribulose 5-phosphate. It functions in the pathway carbohydrate degradation; pentose phosphate pathway; D-ribose 5-phosphate from D-ribulose 5-phosphate (non-oxidative stage): step 1/1. Catalyzes the reversible conversion of ribose-5-phosphate to ribulose 5-phosphate. The chain is Ribose-5-phosphate isomerase A from Rhizobium rhizogenes (strain K84 / ATCC BAA-868) (Agrobacterium radiobacter).